Consider the following 261-residue polypeptide: MLLEKSKIEIIEQFIHILEILEMYAKEGSDEKAIIRLMLDYLEKGYVLDDDILPIASKISEIAKKVGSFDMKREISLLLFGERKRLTKSQKNKIKKIIEILEYLKSYIEKKPYKSYEDKLILNLIGLKILRLDNGIVLDYNSEVRSLTNMALRVGSYELKNEIELLLTGRRRRKLTEEFIQKRLSIIKILEMVKDFIDKKEFKSSFDYEALFLINLKIYRIEEGILKNFDEEIESILNIARKVGNHKLREQIVLLKESIKN.

This is an uncharacterized protein from Methanocaldococcus jannaschii (strain ATCC 43067 / DSM 2661 / JAL-1 / JCM 10045 / NBRC 100440) (Methanococcus jannaschii).